The chain runs to 123 residues: UPF0482 protein YE2026 (123 aa).

The first 31 residues, 1 to 31, serve as a signal peptide directing secretion; the sequence is MKITSLPRLMRVFLPVAVLALPLAWQTAALA. Positions 47-66 are disordered; the sequence is GNNDPMSKEQARQSQQQWDD.

The protein belongs to the UPF0482 family.

The polypeptide is UPF0482 protein YE2026 (Yersinia enterocolitica serotype O:8 / biotype 1B (strain NCTC 13174 / 8081)).